The chain runs to 42 residues: Perlinhibin-related protein (42 aa).

Post-translationally, contains four disulfide bonds.

Inhibitor of shell growth. This Haliotis laevigata (Smooth Australian abalone) protein is Perlinhibin-related protein.